A 59-amino-acid chain; its full sequence is Large ribosomal subunit protein bL32 (59 aa).

The segment at 1–20 (MAVQQNKKSRSRKGMRRSHD) is disordered. Basic residues predominate over residues 7–19 (KKSRSRKGMRRSH).

It belongs to the bacterial ribosomal protein bL32 family.

This Nitratidesulfovibrio vulgaris (strain ATCC 29579 / DSM 644 / CCUG 34227 / NCIMB 8303 / VKM B-1760 / Hildenborough) (Desulfovibrio vulgaris) protein is Large ribosomal subunit protein bL32.